Consider the following 266-residue polypeptide: ATP synthase subunit a (266 aa).

5 consecutive transmembrane segments (helical) span residues 28 to 48 (SINV…LVIF), 88 to 108 (LIAP…MMDL), 141 to 161 (DVNI…FYSI), 206 to 226 (LFGN…LLPW), and 237 to 257 (AIFH…LTVV).

It belongs to the ATPase A chain family. As to quaternary structure, F-type ATPases have 2 components, CF(1) - the catalytic core - and CF(0) - the membrane proton channel. CF(1) has five subunits: alpha(3), beta(3), gamma(1), delta(1), epsilon(1). CF(0) has three main subunits: a(1), b(2) and c(9-12). The alpha and beta chains form an alternating ring which encloses part of the gamma chain. CF(1) is attached to CF(0) by a central stalk formed by the gamma and epsilon chains, while a peripheral stalk is formed by the delta and b chains.

The protein resides in the cell inner membrane. Its function is as follows. Key component of the proton channel; it plays a direct role in the translocation of protons across the membrane. This Pectobacterium atrosepticum (strain SCRI 1043 / ATCC BAA-672) (Erwinia carotovora subsp. atroseptica) protein is ATP synthase subunit a.